Reading from the N-terminus, the 318-residue chain is WRKY transcription factor 28 (318 aa).

Composition is skewed to polar residues over residues 74-84 (SSEVFNSSIDQ) and 106-115 (RVSPSNSSSS). Residues 74 to 158 (SSEVFNSSID…KTEVKKQREP (85 aa)) are disordered. 2 stretches are compositionally biased toward basic and acidic residues: residues 116–126 (EADHPGEDSGK) and 148–158 (KKTEVKKQREP). The WRKY DNA-binding region spans 166–231 (SEVDHLEDGY…YEGQHNHPIP (66 aa)).

The protein belongs to the WRKY group II-c family.

Its subcellular location is the nucleus. In terms of biological role, transcription factor. Interacts specifically with the W box (5'-(T)TGAC[CT]-3'), a frequently occurring elicitor-responsive cis-acting element. The sequence is that of WRKY transcription factor 28 (WRKY28) from Arabidopsis thaliana (Mouse-ear cress).